An 896-amino-acid chain; its full sequence is DNA mismatch repair protein MutS (896 aa).

618 to 625 (GPNMSGKS) is a binding site for ATP. Residues 805–825 (GKESTKTGKGENKNISHKTES) are compositionally biased toward basic and acidic residues. The interval 805-826 (GKESTKTGKGENKNISHKTESD) is disordered.

It belongs to the DNA mismatch repair MutS family.

In terms of biological role, this protein is involved in the repair of mismatches in DNA. It is possible that it carries out the mismatch recognition step. This protein has a weak ATPase activity. The chain is DNA mismatch repair protein MutS from Halothermothrix orenii (strain H 168 / OCM 544 / DSM 9562).